The chain runs to 139 residues: Large ribosomal subunit protein uL16 (139 aa).

Residues 1–16 show a composition bias toward basic residues; it reads MLIPKRTKYRKQHRPD. The interval 1-23 is disordered; it reads MLIPKRTKYRKQHRPDRHGMSKG.

This sequence belongs to the universal ribosomal protein uL16 family. In terms of assembly, part of the 50S ribosomal subunit.

Binds 23S rRNA and is also seen to make contacts with the A and possibly P site tRNAs. The chain is Large ribosomal subunit protein uL16 from Bifidobacterium animalis subsp. lactis (strain AD011).